We begin with the raw amino-acid sequence, 480 residues long: Vacuolar amino acid transporter 2 (480 aa).

A disordered region spans residues leucine 21–threonine 48. Positions glycine 37–isoleucine 46 are enriched in polar residues. 9 helical membrane passes run alanine 72–isoleucine 92, alanine 95–leucine 115, leucine 145–isoleucine 165, leucine 214–isoleucine 234, leucine 263–methionine 283, isoleucine 297–phenylalanine 317, isoleucine 338–leucine 358, valine 394–isoleucine 414, and phenylalanine 447–isoleucine 467.

It belongs to the amino acid/polyamine transporter 2 family.

The protein resides in the vacuole membrane. Functionally, probable amino acid transporter of unknown specificity. The protein is Vacuolar amino acid transporter 2 (AVT2) of Saccharomyces cerevisiae (strain ATCC 204508 / S288c) (Baker's yeast).